The chain runs to 217 residues: Uracil-DNA glycosylase (217 aa).

Residue aspartate 62 is the Proton acceptor of the active site.

It belongs to the uracil-DNA glycosylase (UDG) superfamily. UNG family.

It is found in the cytoplasm. It catalyses the reaction Hydrolyzes single-stranded DNA or mismatched double-stranded DNA and polynucleotides, releasing free uracil.. Functionally, excises uracil residues from the DNA which can arise as a result of misincorporation of dUMP residues by DNA polymerase or due to deamination of cytosine. This is Uracil-DNA glycosylase from Streptococcus pyogenes serotype M1.